The sequence spans 765 residues: Putative maltooligosyl trehalose synthase (765 aa).

The protein belongs to the glycosyl hydrolase 13 family. In terms of assembly, monomer.

The enzyme catalyses 4-[(1-&gt;4)-alpha-D-glucosyl](n-1)-D-glucose = 1-[(1-&gt;4)-alpha-D-glucosyl](n-1)-alpha-D-glucose. Functionally, catalyzes the conversion of maltooligosaccharide into the non-reducing saccharide, maltooligosyl trehalose (alpha-maltooligosyl alpha-D-glucoside) by intramolecular transglycosylation. This is Putative maltooligosyl trehalose synthase (treY) from Mycobacterium tuberculosis (strain CDC 1551 / Oshkosh).